A 119-amino-acid chain; its full sequence is Small ribosomal subunit protein uS13 (119 aa).

The segment covering 94-113 has biased composition (basic residues); sequence GLPVRGQRTKTNARTRKGPR. The segment at 94–119 is disordered; that stretch reads GLPVRGQRTKTNARTRKGPRKAIGAK.

This sequence belongs to the universal ribosomal protein uS13 family. In terms of assembly, part of the 30S ribosomal subunit. Forms a loose heterodimer with protein S19. Forms two bridges to the 50S subunit in the 70S ribosome.

Functionally, located at the top of the head of the 30S subunit, it contacts several helices of the 16S rRNA. In the 70S ribosome it contacts the 23S rRNA (bridge B1a) and protein L5 of the 50S subunit (bridge B1b), connecting the 2 subunits; these bridges are implicated in subunit movement. Contacts the tRNAs in the A and P-sites. This Nitrosomonas europaea (strain ATCC 19718 / CIP 103999 / KCTC 2705 / NBRC 14298) protein is Small ribosomal subunit protein uS13.